The primary structure comprises 914 residues: Thyroid peroxidase (914 aa).

A signal peptide spans 1-31 (MRTLGAMAIMLVVMGTVIFLSFILRSRDILC). Topologically, residues 32 to 834 (GKTMKSHVIS…TCIDSGRLPR (803 aa)) are extracellular. The N-linked (GlcNAc...) asparagine glycan is linked to Asn123. Cysteines 136 and 152 form a disulfide. Asp232 provides a ligand contact to heme b. His233 serves as the catalytic Proton acceptor. Residue Asp234 participates in Ca(2+) binding. 2 disulfide bridges follow: Cys253/Cys263 and Cys257/Cys278. Residues Asn271 and Asn299 are each glycosylated (N-linked (GlcNAc...) asparagine). Thr313, Phe315, Asp317, and Ser319 together coordinate Ca(2+). N-linked (GlcNAc...) asparagine glycosylation occurs at Asn334. Heme b-binding residues include Glu387 and His482. 7 disulfides stabilise this stretch: Cys586–Cys643, Cys684–Cys709, Cys730–Cys770, Cys756–Cys782, Cys788–Cys802, Cys796–Cys811, and Cys813–Cys826. N-linked (GlcNAc...) asparagine glycosylation occurs at Asn603. Residues 728 to 783 (DKCVFPEEVDNGNFVHCEESGKLVLVYSCFHGYKLQGQEQVTCTQKGWDSEPPVCK) form the Sushi domain. The region spanning 784 to 827 (DVNECADLTHPPCHPSAQCKNTKGSFQCVCTDPYVLGEDEKTCI) is the EGF-like; calcium-binding domain. The helical transmembrane segment at 835–859 (ASWVSIALGALLIGGLASLTWIVIC) threads the bilayer. Over 860–914 (RWTHADKKATLPITERVTTQSGCRKSQGRGISPHKAAAQDTGQEPASGSRVLLCE) the chain is Cytoplasmic. Positions 881–909 (GCRKSQGRGISPHKAAAQDTGQEPASGSR) are disordered.

Belongs to the peroxidase family. XPO subfamily. Interacts with DUOX1, DUOX2 and CYBA. Ca(2+) is required as a cofactor. It depends on heme b as a cofactor. Post-translationally, heme is covalently bound through a H(2)O(2)-dependent autocatalytic process. Heme insertion is important for the delivery of protein at the cell surface. Cleaved in its N-terminal part.

The protein resides in the membrane. The catalysed reaction is 2 iodide + H2O2 + 2 H(+) = diiodine + 2 H2O. It catalyses the reaction [thyroglobulin]-L-tyrosine + iodide + H2O2 + H(+) = [thyroglobulin]-3-iodo-L-tyrosine + 2 H2O. The enzyme catalyses [thyroglobulin]-3-iodo-L-tyrosine + iodide + H2O2 + H(+) = [thyroglobulin]-3,5-diiodo-L-tyrosine + 2 H2O. It carries out the reaction 2 [thyroglobulin]-3,5-diiodo-L-tyrosine + H2O2 = [thyroglobulin]-L-thyroxine + [thyroglobulin]-dehydroalanine + 2 H2O. The catalysed reaction is [thyroglobulin]-3-iodo-L-tyrosine + [thyroglobulin]-3,5-diiodo-L-tyrosine + H2O2 = [thyroglobulin]-3,3',5-triiodo-L-thyronine + [thyroglobulin]-dehydroalanine + 2 H2O. It functions in the pathway hormone biosynthesis; thyroid hormone biosynthesis. Iodination and coupling of the hormonogenic tyrosines in thyroglobulin to yield the thyroid hormones T(3) and T(4). The chain is Thyroid peroxidase (Tpo) from Mus musculus (Mouse).